The sequence spans 141 residues: Transcription antitermination protein NusB (141 aa).

Belongs to the NusB family.

Functionally, involved in transcription antitermination. Required for transcription of ribosomal RNA (rRNA) genes. Binds specifically to the boxA antiterminator sequence of the ribosomal RNA (rrn) operons. The polypeptide is Transcription antitermination protein NusB (Neisseria meningitidis serogroup B (strain ATCC BAA-335 / MC58)).